A 168-amino-acid polypeptide reads, in one-letter code: Co-chaperone protein HscB homolog (168 aa).

Positions 5 to 77 constitute a J domain; the sequence is DYFSLFGLPS…MLRARYLCES (73 aa).

Belongs to the HscB family. As to quaternary structure, interacts with HscA and stimulates its ATPase activity.

Functionally, co-chaperone involved in the maturation of iron-sulfur cluster-containing proteins. Seems to help targeting proteins to be folded toward HscA. In Bordetella avium (strain 197N), this protein is Co-chaperone protein HscB homolog.